Reading from the N-terminus, the 367-residue chain is 2-aminoethylphosphonate--pyruvate transaminase (367 aa).

The residue at position 194 (Lys-194) is an N6-(pyridoxal phosphate)lysine.

It belongs to the class-V pyridoxal-phosphate-dependent aminotransferase family. PhnW subfamily. Homodimer. Pyridoxal 5'-phosphate serves as cofactor.

The catalysed reaction is (2-aminoethyl)phosphonate + pyruvate = phosphonoacetaldehyde + L-alanine. In terms of biological role, involved in phosphonate degradation. The protein is 2-aminoethylphosphonate--pyruvate transaminase of Salmonella schwarzengrund (strain CVM19633).